The following is a 160-amino-acid chain: Major strawberry allergen Fra a 1-E (160 aa).

The protein belongs to the BetVI family. In terms of assembly, monomer. Interacts with AP. In terms of tissue distribution, highly expressed in roots. Expressed in open flowers. Expressed at low levels in leaves, flower buds and fruits.

Involved in the control of flavonoid biosynthesis in fruits, probably by binding directly to natural flavonoids. Binds the natural flavonoid quercetin-3-O-glucuronide with affinities in the low micromolar range. The polypeptide is Major strawberry allergen Fra a 1-E (Fragaria ananassa (Strawberry)).